We begin with the raw amino-acid sequence, 136 residues long: Large ribosomal subunit protein uL16 (136 aa).

The protein belongs to the universal ribosomal protein uL16 family. As to quaternary structure, part of the 50S ribosomal subunit.

Functionally, binds 23S rRNA and is also seen to make contacts with the A and possibly P site tRNAs. The chain is Large ribosomal subunit protein uL16 from Pasteurella multocida (strain Pm70).